Here is a 395-residue protein sequence, read N- to C-terminus: NAC domain-containing protein 7 (395 aa).

Positions 7-156 (VPPGFRFHPT…GWVVCRVFKK (150 aa)) constitute an NAC domain. Residues 107–162 (IGMRKTLVFYKGRAPNGQKSDWIMHEYRLETDENGTPQEEGWVVCRVFKKRLAAVR) mediate DNA binding. Composition is skewed to polar residues over residues 344 to 362 (AATASASIQNNAKDTSNAE) and 382 to 395 (TASTSSSCQIDLWK). A disordered region spans residues 344–395 (AATASASIQNNAKDTSNAEYQVDEEKDPKRASDMGEEYTASTSSSCQIDLWK).

It belongs to the plant vascular related NAC-domain protein family. As to quaternary structure, interacts with NAC083/VNI2. Expressed in root, shoot and hypocotyl vascular elements, columella root caps, epidermal and cortex root cells and root-hypocotyl junctions. Observed predominantly in root imature xylem vessels. Present in root developing xylems. Specifically expressed in vessels in the secondary xylem of the root-hypocotyl region, and in vessels but not in interfascicular fibers in stems.

It is found in the nucleus. Functionally, transcription activator that binds to the secondary wall NAC binding element (SNBE), 5'-(T/A)NN(C/T)(T/C/G)TNNNNNNNA(A/C)GN(A/C/T)(A/T)-3', in the promoter of target genes. Involved in xylem formation by promoting the expression of secondary wall-associated transcription factors and of genes involved in secondary wall biosynthesis and programmed cell death, genes driven by the secondary wall NAC binding element (SNBE). Triggers thickening of secondary walls. This Arabidopsis thaliana (Mouse-ear cress) protein is NAC domain-containing protein 7.